We begin with the raw amino-acid sequence, 344 residues long: Protein pelota homolog (344 aa).

Belongs to the eukaryotic release factor 1 family. Pelota subfamily. As to quaternary structure, monomer. A divalent metal cation serves as cofactor.

It is found in the cytoplasm. Functionally, may function in recognizing stalled ribosomes, interact with stem-loop structures in stalled mRNA molecules, and effect endonucleolytic cleavage of the mRNA. May play a role in the release non-functional ribosomes and degradation of damaged mRNAs. Has endoribonuclease activity. The polypeptide is Protein pelota homolog (Archaeoglobus fulgidus (strain ATCC 49558 / DSM 4304 / JCM 9628 / NBRC 100126 / VC-16)).